Here is a 109-residue protein sequence, read N- to C-terminus: Nucleoid-associated protein Bcer98_0019 (109 aa).

Belongs to the YbaB/EbfC family. As to quaternary structure, homodimer.

Its subcellular location is the cytoplasm. The protein resides in the nucleoid. Binds to DNA and alters its conformation. May be involved in regulation of gene expression, nucleoid organization and DNA protection. The polypeptide is Nucleoid-associated protein Bcer98_0019 (Bacillus cytotoxicus (strain DSM 22905 / CIP 110041 / 391-98 / NVH 391-98)).